We begin with the raw amino-acid sequence, 208 residues long: LexA repressor (208 aa).

A DNA-binding region (H-T-H motif) is located at residues 28 to 48 (RAEIARQLGFRSANAAEEHLK). Catalysis depends on for autocatalytic cleavage activity residues Ser125 and Lys162.

The protein belongs to the peptidase S24 family. As to quaternary structure, homodimer.

It carries out the reaction Hydrolysis of Ala-|-Gly bond in repressor LexA.. Functionally, represses a number of genes involved in the response to DNA damage (SOS response), including recA and lexA. In the presence of single-stranded DNA, RecA interacts with LexA causing an autocatalytic cleavage which disrupts the DNA-binding part of LexA, leading to derepression of the SOS regulon and eventually DNA repair. In Alteromonas mediterranea (strain DSM 17117 / CIP 110805 / LMG 28347 / Deep ecotype), this protein is LexA repressor.